Reading from the N-terminus, the 201-residue chain is Ras-related protein Rab-9B (201 aa).

The GTP site is built by V18, G19, K20, S21, S22, D33, S34, A36, H38, and T39. S21 provides a ligand contact to Mg(2+). Positions 31 to 42 match the Switch 1 motif; the sequence is KFDSQAFHTIGV. Phosphoserine is present on S34. Residues T39 and D62 each contribute to the Mg(2+) site. Positions 64–78 match the Switch 2 motif; it reads AGQERFKSLRTPFYR. GTP-binding residues include G65, N124, K125, A155, and K156. Residues C200 and C201 are each lipidated (S-geranylgeranyl cysteine).

This sequence belongs to the small GTPase superfamily. Rab family. Interacts (GTP-bound form) with SGSM1; the GDP-bound form has much lower affinity for SGSM1. The GTP-bound form but not the GDP-bound form interacts with HPS4 and the BLOC-3 complex (heterodimer of HPS1 and HPS4) but does not interact with HPS1 alone. Interacts (GTP-bound form) with NDE1. Requires Mg(2+) as cofactor. In terms of tissue distribution, ubiquitous.

The protein resides in the cell membrane. It localises to the cytoplasmic vesicle. Its subcellular location is the phagosome. It is found in the phagosome membrane. It carries out the reaction GTP + H2O = GDP + phosphate + H(+). With respect to regulation, regulated by guanine nucleotide exchange factors (GEFs) which promote the exchange of bound GDP for free GTP. Regulated by GTPase activating proteins (GAPs) which increase the GTP hydrolysis activity. Inhibited by GDP dissociation inhibitors (GDIs). Its function is as follows. The small GTPases Rab are key regulators of intracellular membrane trafficking, from the formation of transport vesicles to their fusion with membranes. Rabs cycle between an inactive GDP-bound form and an active GTP-bound form that is able to recruit to membranes different sets of downstream effectors directly responsible for vesicle formation, movement, tethering and fusion. RAB9B is involved in the transport of proteins between the endosomes and the trans Golgi network. May use NDE1/NDEL1 as an effector to interact with the dynein motor complex in order to control retrograde trafficking of RAB9-associated late endosomes to the TGN. The sequence is that of Ras-related protein Rab-9B from Homo sapiens (Human).